The primary structure comprises 570 residues: MTETQHIFRLTVHRFMDFPLSIYSSFTQLKPTPGLKKIIAVAAISGVSLIFLACHLKRKRGKKKINAPQTEPGQFILQCSRHVAEKGSSCSSSRQNLTLSLGSIKERGSQSHLNGDLCSKYSGSMQSLASVQSCHSCACINSNSWDKTDEDEINIPVTTPENLYLMGMELFEEALRRWEQALTFRSRQAEDEANCSSIKLGAGDAIAEENIEDVISADFIHKLEALLQRAYRLQEEFEATLGASDPASLANDIDKDTDITVMDNGGDFQQRDTLSIASTDSFLSAAELADNQDMRATCGLDSLYHHALYEEAMQLAEEGKVHCRVLRTEMLECLGDSDFLAKLHCIRQAFQEIILQRENRIFLMGTGRKLLSALIVKARKNPKKFEDAYFDMMSFLEQPESWDTVEKELLSRGMKCMNFYDIVLDFIVMDSLEDLENPPLSIQNVVRNRWLNSSFKETAVTSSCWSVLRQKKQEMKVPNGFFANFYTVCEQLCPVLAWGFLGPRSSLHDLCCFYKAQIMYFLKDIFDFEKVRYSDVEHLAEDIMKCLQRRTELTVVYTGEESARRPPVLN.

The helical transmembrane segment at 34-54 (GLKKIIAVAAISGVSLIFLAC) threads the bilayer.

The protein belongs to the mitoguardin family. Homodimer and heterodimer; forms heterodimers with miga2.

The protein resides in the mitochondrion outer membrane. Regulator of mitochondrial fusion: acts by forming homo- and heterodimers at the mitochondrial outer membrane and facilitating the formation of pld6/MitoPLD dimers. May act by regulating phospholipid metabolism via pld6/MitoPLD. The polypeptide is Mitoguardin 1 (Xenopus laevis (African clawed frog)).